Consider the following 132-residue polypeptide: Large ribosomal subunit protein uL14 (132 aa).

This sequence belongs to the universal ribosomal protein uL14 family. As to quaternary structure, part of the 50S ribosomal subunit. Forms a cluster with proteins L3 and L24e, part of which may contact the 16S rRNA in 2 intersubunit bridges.

In terms of biological role, binds to 23S rRNA. Forms part of two intersubunit bridges in the 70S ribosome. The sequence is that of Large ribosomal subunit protein uL14 from Methanococcus maripaludis (strain C5 / ATCC BAA-1333).